Reading from the N-terminus, the 189-residue chain is Cytidylate kinase (189 aa).

Residue 7–15 (GPPGSGKTS) participates in ATP binding.

It belongs to the cytidylate kinase family. Type 2 subfamily.

The protein localises to the cytoplasm. It catalyses the reaction CMP + ATP = CDP + ADP. The enzyme catalyses dCMP + ATP = dCDP + ADP. The protein is Cytidylate kinase of Saccharolobus islandicus (strain Y.N.15.51 / Yellowstone #2) (Sulfolobus islandicus).